We begin with the raw amino-acid sequence, 269 residues long: Phosphate import ATP-binding protein PstB 2 (269 aa).

The 242-residue stretch at 23–264 (LHTEDLHVFY…PKIQATEDYV (242 aa)) folds into the ABC transporter domain. Position 55-62 (55-62 (GPSGCGKS)) interacts with ATP.

The protein belongs to the ABC transporter superfamily. Phosphate importer (TC 3.A.1.7) family. In terms of assembly, the complex is composed of two ATP-binding proteins (PstB), two transmembrane proteins (PstC and PstA) and a solute-binding protein (PstS).

It is found in the cell membrane. It catalyses the reaction phosphate(out) + ATP + H2O = ADP + 2 phosphate(in) + H(+). In terms of biological role, part of the ABC transporter complex PstSACB involved in phosphate import. Responsible for energy coupling to the transport system. In Enterococcus faecalis (strain ATCC 700802 / V583), this protein is Phosphate import ATP-binding protein PstB 2.